The sequence spans 957 residues: Glycine dehydrogenase (decarboxylating) (957 aa).

K702 is subject to N6-(pyridoxal phosphate)lysine.

It belongs to the GcvP family. As to quaternary structure, the glycine cleavage system is composed of four proteins: P, T, L and H. Requires pyridoxal 5'-phosphate as cofactor.

The catalysed reaction is N(6)-[(R)-lipoyl]-L-lysyl-[glycine-cleavage complex H protein] + glycine + H(+) = N(6)-[(R)-S(8)-aminomethyldihydrolipoyl]-L-lysyl-[glycine-cleavage complex H protein] + CO2. The glycine cleavage system catalyzes the degradation of glycine. The P protein binds the alpha-amino group of glycine through its pyridoxal phosphate cofactor; CO(2) is released and the remaining methylamine moiety is then transferred to the lipoamide cofactor of the H protein. In Bradyrhizobium sp. (strain BTAi1 / ATCC BAA-1182), this protein is Glycine dehydrogenase (decarboxylating).